The sequence spans 193 residues: Regulator of free ubiquitin chains 1 (193 aa).

It belongs to the RFU1 family.

The protein localises to the endosome. In terms of biological role, inhibitor of the DOA4 deubiquitinase involved in the regulation of protein degradation by the proteasome and maintenance of a normal level of free ubiquitin. The sequence is that of Regulator of free ubiquitin chains 1 (RFU1) from Eremothecium gossypii (strain ATCC 10895 / CBS 109.51 / FGSC 9923 / NRRL Y-1056) (Yeast).